A 369-amino-acid chain; its full sequence is Glutamate 5-kinase (369 aa).

K9 serves as a coordination point for ATP. 3 residues coordinate substrate: S49, D136, and N148. Residues 168–169 and 210–216 each bind ATP; these read TD and TGGMLTK. The PUA domain occupies 275 to 355; sequence QGSIWVDKGA…KGVLIYRDDW (81 aa).

It belongs to the glutamate 5-kinase family.

Its subcellular location is the cytoplasm. It catalyses the reaction L-glutamate + ATP = L-glutamyl 5-phosphate + ADP. Its pathway is amino-acid biosynthesis; L-proline biosynthesis; L-glutamate 5-semialdehyde from L-glutamate: step 1/2. In terms of biological role, catalyzes the transfer of a phosphate group to glutamate to form L-glutamate 5-phosphate. This chain is Glutamate 5-kinase, found in Streptococcus pneumoniae (strain ATCC 700669 / Spain 23F-1).